The chain runs to 228 residues: MINWLVLNAVILIVAYLLGATPSGYWIGSWFYGVDIREQGSGSTGATNVLRTLGNVPALVVLVIDIFKGALAIALVRYIYSLVFAQNLTIIAGVTDIDTAKEWMVIIAGLIAIVGHTKSIWIGFKGGKSVASSLGILLAISWVVGLGTLSVFIVVLTISRIVSLSSIIAAISVSGLMFFTGQPLPYQIFAITGGIYVIWRHISNIERLLACKEPRIGQKLSTEQKMNK.

6 consecutive transmembrane segments (helical) span residues 1–21, 56–76, 104–124, 136–156, 161–181, and 183–203; these read MINW…LGAT, VPAL…IALV, MVII…WIGF, ILLA…IVVL, IVSL…FFTG, and PLPY…RHIS.

The protein belongs to the PlsY family. As to quaternary structure, probably interacts with PlsX.

It is found in the cell inner membrane. The catalysed reaction is an acyl phosphate + sn-glycerol 3-phosphate = a 1-acyl-sn-glycero-3-phosphate + phosphate. The protein operates within lipid metabolism; phospholipid metabolism. Its function is as follows. Catalyzes the transfer of an acyl group from acyl-phosphate (acyl-PO(4)) to glycerol-3-phosphate (G3P) to form lysophosphatidic acid (LPA). This enzyme utilizes acyl-phosphate as fatty acyl donor, but not acyl-CoA or acyl-ACP. In Trichodesmium erythraeum (strain IMS101), this protein is Glycerol-3-phosphate acyltransferase.